The following is a 412-amino-acid chain: Serine hydroxymethyltransferase (412 aa).

Residues Leu117 and 121-123 (GHL) contribute to the (6S)-5,6,7,8-tetrahydrofolate site. N6-(pyridoxal phosphate)lysine is present on Lys226. Residues Glu242 and 350-352 (SPF) contribute to the (6S)-5,6,7,8-tetrahydrofolate site.

Belongs to the SHMT family. Homodimer. Pyridoxal 5'-phosphate serves as cofactor.

It localises to the cytoplasm. The enzyme catalyses (6R)-5,10-methylene-5,6,7,8-tetrahydrofolate + glycine + H2O = (6S)-5,6,7,8-tetrahydrofolate + L-serine. It functions in the pathway one-carbon metabolism; tetrahydrofolate interconversion. Its pathway is amino-acid biosynthesis; glycine biosynthesis; glycine from L-serine: step 1/1. Functionally, catalyzes the reversible interconversion of serine and glycine with tetrahydrofolate (THF) serving as the one-carbon carrier. Appears to be specific for THF as the pteridine substrate, since the use of tetrahydromethanopterin (H4MPT) is much less efficient. Also exhibits THF-independent aldolase activity toward beta-hydroxyamino acids, producing glycine and aldehydes, via a retro-aldol mechanism. Thus, is able to catalyze the cleavage of L-allo-threonine and L-threo-beta-phenylserine. The sequence is that of Serine hydroxymethyltransferase from Methanosarcina barkeri (strain Fusaro / DSM 804).